A 419-amino-acid chain; its full sequence is MDKFRVQGPTQLTGEVIISGAKNAALPILFAALLAEEPVEIQNVPKLRDIDTTMKLLSQLGARVERNGSVHVDAGPVNVFCAPYDLVKTMRASIWALGPLVARFGQGQVSLPGGCAIGARPVDLHINGLEQLGAKITLEEGYVKASVNGRLKGAHIVMDKVSVGATVTIMCAATLAEGKTIIENAAREPEIVDTANFLNTMGAKISGAGSDKIIIEGVKRLGGGVYRVLPDRIETGTFLVAAAVTGGKIVCRNTRPDTLDAVLAKLTDAGADIEVGEDWISLDMQGRRPKAVNIRTAPHPGFPTDMQAQFSLLNMVAEGTGVITETIFENRFMHIPELIRMGGHAEIESNTVICQGVARLSGAQVMATDLRASASLVIAGFVAQGTTIVDRIYHIDRGYESIEEKFRALGGQIDRIKGE.

22 to 23 (KN) lines the phosphoenolpyruvate pocket. Arg91 provides a ligand contact to UDP-N-acetyl-alpha-D-glucosamine. Catalysis depends on Cys115, which acts as the Proton donor. Cys115 is subject to 2-(S-cysteinyl)pyruvic acid O-phosphothioketal. UDP-N-acetyl-alpha-D-glucosamine is bound by residues 120-124 (RPVDL), 160-163 (KVSV), Asp305, and Ile327.

The protein belongs to the EPSP synthase family. MurA subfamily.

The protein resides in the cytoplasm. The enzyme catalyses phosphoenolpyruvate + UDP-N-acetyl-alpha-D-glucosamine = UDP-N-acetyl-3-O-(1-carboxyvinyl)-alpha-D-glucosamine + phosphate. It functions in the pathway cell wall biogenesis; peptidoglycan biosynthesis. Cell wall formation. Adds enolpyruvyl to UDP-N-acetylglucosamine. The chain is UDP-N-acetylglucosamine 1-carboxyvinyltransferase from Tolumonas auensis (strain DSM 9187 / NBRC 110442 / TA 4).